We begin with the raw amino-acid sequence, 218 residues long: GTP cyclohydrolase 1 (218 aa).

Residues C109, H112, and C180 each contribute to the Zn(2+) site.

Belongs to the GTP cyclohydrolase I family. In terms of assembly, toroid-shaped homodecamer, composed of two pentamers of five dimers.

It carries out the reaction GTP + H2O = 7,8-dihydroneopterin 3'-triphosphate + formate + H(+). Its pathway is cofactor biosynthesis; 7,8-dihydroneopterin triphosphate biosynthesis; 7,8-dihydroneopterin triphosphate from GTP: step 1/1. The protein is GTP cyclohydrolase 1 of Aeromonas hydrophila subsp. hydrophila (strain ATCC 7966 / DSM 30187 / BCRC 13018 / CCUG 14551 / JCM 1027 / KCTC 2358 / NCIMB 9240 / NCTC 8049).